The chain runs to 167 residues: Translation initiation factor IF-3 (167 aa).

It belongs to the IF-3 family. As to quaternary structure, monomer.

It is found in the cytoplasm. Functionally, IF-3 binds to the 30S ribosomal subunit and shifts the equilibrium between 70S ribosomes and their 50S and 30S subunits in favor of the free subunits, thus enhancing the availability of 30S subunits on which protein synthesis initiation begins. This chain is Translation initiation factor IF-3, found in Shouchella clausii (strain KSM-K16) (Alkalihalobacillus clausii).